We begin with the raw amino-acid sequence, 162 residues long: NADH-quinone oxidoreductase subunit I (162 aa).

2 4Fe-4S ferredoxin-type domains span residues 54–83 (RRYE…IESE) and 93–122 (TRYD…ETQI). Cys-63, Cys-66, Cys-69, Cys-73, Cys-102, Cys-105, Cys-108, and Cys-112 together coordinate [4Fe-4S] cluster.

Belongs to the complex I 23 kDa subunit family. As to quaternary structure, NDH-1 is composed of 14 different subunits. Subunits NuoA, H, J, K, L, M, N constitute the membrane sector of the complex. [4Fe-4S] cluster is required as a cofactor.

The protein localises to the cell inner membrane. It catalyses the reaction a quinone + NADH + 5 H(+)(in) = a quinol + NAD(+) + 4 H(+)(out). In terms of biological role, NDH-1 shuttles electrons from NADH, via FMN and iron-sulfur (Fe-S) centers, to quinones in the respiratory chain. The immediate electron acceptor for the enzyme in this species is believed to be ubiquinone. Couples the redox reaction to proton translocation (for every two electrons transferred, four hydrogen ions are translocated across the cytoplasmic membrane), and thus conserves the redox energy in a proton gradient. The sequence is that of NADH-quinone oxidoreductase subunit I from Burkholderia cenocepacia (strain HI2424).